The primary structure comprises 131 residues: Small ribosomal subunit protein uS11 (131 aa).

The protein belongs to the universal ribosomal protein uS11 family. As to quaternary structure, part of the 30S ribosomal subunit. Interacts with proteins S7 and S18. Binds to IF-3.

Its function is as follows. Located on the platform of the 30S subunit, it bridges several disparate RNA helices of the 16S rRNA. Forms part of the Shine-Dalgarno cleft in the 70S ribosome. The sequence is that of Small ribosomal subunit protein uS11 from Chromobacterium violaceum (strain ATCC 12472 / DSM 30191 / JCM 1249 / CCUG 213 / NBRC 12614 / NCIMB 9131 / NCTC 9757 / MK).